The sequence spans 328 residues: Tetraacyldisaccharide 4'-kinase (328 aa).

Residue 55 to 62 (TAGGNGKT) coordinates ATP.

It belongs to the LpxK family.

It carries out the reaction a lipid A disaccharide + ATP = a lipid IVA + ADP + H(+). The protein operates within glycolipid biosynthesis; lipid IV(A) biosynthesis; lipid IV(A) from (3R)-3-hydroxytetradecanoyl-[acyl-carrier-protein] and UDP-N-acetyl-alpha-D-glucosamine: step 6/6. Transfers the gamma-phosphate of ATP to the 4'-position of a tetraacyldisaccharide 1-phosphate intermediate (termed DS-1-P) to form tetraacyldisaccharide 1,4'-bis-phosphate (lipid IVA). The sequence is that of Tetraacyldisaccharide 4'-kinase from Escherichia coli O6:K15:H31 (strain 536 / UPEC).